The following is a 118-amino-acid chain: Large ribosomal subunit protein uL22 (118 aa).

It belongs to the universal ribosomal protein uL22 family. Part of the 50S ribosomal subunit.

In terms of biological role, this protein binds specifically to 23S rRNA; its binding is stimulated by other ribosomal proteins, e.g. L4, L17, and L20. It is important during the early stages of 50S assembly. It makes multiple contacts with different domains of the 23S rRNA in the assembled 50S subunit and ribosome. Functionally, the globular domain of the protein is located near the polypeptide exit tunnel on the outside of the subunit, while an extended beta-hairpin is found that lines the wall of the exit tunnel in the center of the 70S ribosome. The sequence is that of Large ribosomal subunit protein uL22 from Pediococcus pentosaceus (strain ATCC 25745 / CCUG 21536 / LMG 10740 / 183-1w).